The primary structure comprises 1071 residues: Myosin IF heavy chain (1071 aa).

Residues 40–736 (VGLTDMCFLE…TLFHFEELRQ (697 aa)) enclose the Myosin motor domain. 134–141 (GESGSGKT) provides a ligand contact to ATP. An actin-binding region spans residues 610–632 (INDLIGKLNTCQPHYIRCIKSNE). In terms of domain architecture, IQ spans 739-768 (LPSIVITIQRVWRGYKVRKWYKQELQRLRE). The TH1 domain maps to 870 to 1069 (SRKKEWDCRR…KGNTAIVYYN (200 aa)).

The protein belongs to the TRAFAC class myosin-kinesin ATPase superfamily. Myosin family. As to quaternary structure, myosin I heavy chain is single-headed. Dimer of a heavy and a light chain. Inability to self-assemble into filaments.

Myosin is a protein that binds to actin and has ATPase activity that is activated by actin. This is Myosin IF heavy chain (myoF) from Dictyostelium discoideum (Social amoeba).